The primary structure comprises 210 residues: ATP-dependent Clp protease proteolytic subunit (210 aa).

S107 acts as the Nucleophile in catalysis. H132 is a catalytic residue.

This sequence belongs to the peptidase S14 family. As to quaternary structure, fourteen ClpP subunits assemble into 2 heptameric rings which stack back to back to give a disk-like structure with a central cavity, resembling the structure of eukaryotic proteasomes.

It is found in the cytoplasm. It carries out the reaction Hydrolysis of proteins to small peptides in the presence of ATP and magnesium. alpha-casein is the usual test substrate. In the absence of ATP, only oligopeptides shorter than five residues are hydrolyzed (such as succinyl-Leu-Tyr-|-NHMec, and Leu-Tyr-Leu-|-Tyr-Trp, in which cleavage of the -Tyr-|-Leu- and -Tyr-|-Trp bonds also occurs).. In terms of biological role, cleaves peptides in various proteins in a process that requires ATP hydrolysis. Has a chymotrypsin-like activity. Plays a major role in the degradation of misfolded proteins. This Chromobacterium violaceum (strain ATCC 12472 / DSM 30191 / JCM 1249 / CCUG 213 / NBRC 12614 / NCIMB 9131 / NCTC 9757 / MK) protein is ATP-dependent Clp protease proteolytic subunit.